We begin with the raw amino-acid sequence, 724 residues long: Phosphoribosylformylglycinamidine synthase subunit PurL (724 aa).

Residue histidine 46 is part of the active site. ATP-binding residues include tyrosine 49 and lysine 88. Glutamate 90 contributes to the Mg(2+) binding site. Substrate-binding positions include 91 to 94 (SHNH) and arginine 113. The active-site Proton acceptor is the histidine 92. A Mg(2+)-binding site is contributed by aspartate 114. Glutamine 237 contributes to the substrate binding site. Aspartate 265 serves as a coordination point for Mg(2+). 309–311 (ESQ) serves as a coordination point for substrate. 2 residues coordinate ATP: aspartate 489 and glycine 526. Asparagine 527 contacts Mg(2+). Serine 529 is a binding site for substrate.

It belongs to the FGAMS family. Monomer. Part of the FGAM synthase complex composed of 1 PurL, 1 PurQ and 2 PurS subunits.

It localises to the cytoplasm. It catalyses the reaction N(2)-formyl-N(1)-(5-phospho-beta-D-ribosyl)glycinamide + L-glutamine + ATP + H2O = 2-formamido-N(1)-(5-O-phospho-beta-D-ribosyl)acetamidine + L-glutamate + ADP + phosphate + H(+). The protein operates within purine metabolism; IMP biosynthesis via de novo pathway; 5-amino-1-(5-phospho-D-ribosyl)imidazole from N(2)-formyl-N(1)-(5-phospho-D-ribosyl)glycinamide: step 1/2. Part of the phosphoribosylformylglycinamidine synthase complex involved in the purines biosynthetic pathway. Catalyzes the ATP-dependent conversion of formylglycinamide ribonucleotide (FGAR) and glutamine to yield formylglycinamidine ribonucleotide (FGAM) and glutamate. The FGAM synthase complex is composed of three subunits. PurQ produces an ammonia molecule by converting glutamine to glutamate. PurL transfers the ammonia molecule to FGAR to form FGAM in an ATP-dependent manner. PurS interacts with PurQ and PurL and is thought to assist in the transfer of the ammonia molecule from PurQ to PurL. The sequence is that of Phosphoribosylformylglycinamidine synthase subunit PurL from Granulibacter bethesdensis (strain ATCC BAA-1260 / CGDNIH1).